The chain runs to 1556 residues: Lysine-specific demethylase 5C (1556 aa).

The JmjN domain occupies 14 to 55; that stretch reads CPVFEPSWAEFRDPLGYIAKIRPIAEKSGICKIRPPADWQPP. Positions 79–169 constitute an ARID domain; sequence TRVKLNYLDQ…IVYPYEMYQS (91 aa). A compositionally biased stretch (polar residues) spans 197–207; that stretch reads LRQSVQPSKFN. Residues 197-227 are disordered; sequence LRQSVQPSKFNSYGRRAKRLQPDPEPTEEDI. Residues Lys205, Lys229, Lys244, and Lys274 each participate in a glycyl lysine isopeptide (Lys-Gly) (interchain with G-Cter in SUMO2) cross-link. The segment at 257 to 303 is disordered; it reads LRKKDKEGPECPPTVVVKEESGGDVKVESTSPKTFLESKEELSHSPE. Over residues 273-283 the composition is skewed to basic and acidic residues; that stretch reads VKEESGGDVKV. At Ser287 the chain carries Phosphoserine. Residue Lys295 forms a Glycyl lysine isopeptide (Lys-Gly) (interchain with G-Cter in SUMO2) linkage. 2 positions are modified to phosphoserine: Ser301 and Ser317. The PHD-type 1 zinc finger occupies 324–374; the sequence is SYVCRMCSRGDEDDKLLLCDGCDDNYHIFCLLPPLPEIPKGVWRCPKCVMA. Residues 468–634 form the JmjC domain; sequence EYATSGWNLN…AGRQCIEHYR (167 aa). His514, Asp517, and His602 together coordinate Fe cation. Ser893 and Ser897 each carry phosphoserine. Lys1127 is covalently cross-linked (Glycyl lysine isopeptide (Lys-Gly) (interchain with G-Cter in SUMO2)). The PHD-type 2 zinc-finger motif lies at 1185–1250; that stretch reads TSVCVCGQVP…KFLCPLCMRS (66 aa). Disordered stretches follow at residues 1315–1362 and 1441–1556; these read LQAE…SPEK and ERHG…QQQL. Over residues 1335–1345 the composition is skewed to basic and acidic residues; it reads PLREGSGKDMP. Ser1359 is modified (phosphoserine). Residues 1445–1460 show a composition bias toward basic residues; that stretch reads SRARGRALERRRRRKV. Basic and acidic residues predominate over residues 1461 to 1478; it reads DRGGEGDDPAREELEPKR. Residues 1485–1500 are compositionally biased toward acidic residues; that stretch reads EAEEAQEEEELEEETG. Composition is skewed to polar residues over residues 1513 to 1522 and 1530 to 1540; these read SPSTQENQNG and SGPSAPFSTLS. Residues 1541 to 1556 show a composition bias toward low complexity; it reads PQLHVPCPQQPPQQQL.

This sequence belongs to the JARID1 histone demethylase family. As to quaternary structure, part of two distinct complexes, one containing E2F6, and the other containing REST. Interacts with ZMYND8. Requires Fe(2+) as cofactor.

It is found in the nucleus. The catalysed reaction is N(6),N(6),N(6)-trimethyl-L-lysyl(4)-[histone H3] + 3 2-oxoglutarate + 3 O2 = L-lysyl(4)-[histone H3] + 3 formaldehyde + 3 succinate + 3 CO2. In terms of biological role, histone demethylase that specifically demethylates 'Lys-4' of histone H3, thereby playing a central role in histone code. Does not demethylate histone H3 'Lys-9', H3 'Lys-27', H3 'Lys-36', H3 'Lys-79' or H4 'Lys-20'. Demethylates trimethylated and dimethylated but not monomethylated H3 'Lys-4'. Participates in transcriptional repression of neuronal genes by recruiting histone deacetylases and REST at neuron-restrictive silencer elements. Represses the CLOCK-BMAL1 heterodimer-mediated transcriptional activation of the core clock component PER2. The protein is Lysine-specific demethylase 5C (KDM5C) of Canis lupus familiaris (Dog).